A 500-amino-acid chain; its full sequence is Aldehyde dehydrogenase, mitochondrial (500 aa).

N6-acetyllysine is present on residues Lys-35, Lys-56, and Lys-142. 245-250 (GSTEVG) is a binding site for NAD(+). Glu-268 (proton acceptor) is an active-site residue. Residue Cys-302 is the Nucleophile of the active site. An N6-acetyllysine mark is found at Lys-358, Lys-366, Lys-409, Lys-411, Lys-424, and Lys-434.

It belongs to the aldehyde dehydrogenase family. Homotetramer. Post-translationally, in response to mitochondrial stress, the precursor protein is ubiquitinated by the SIFI complex in the cytoplasm before mitochondrial import, leading to its degradation. Within the SIFI complex, UBR4 initiates ubiquitin chain that are further elongated or branched by KCMF1.

Its subcellular location is the mitochondrion matrix. The enzyme catalyses an aldehyde + NAD(+) + H2O = a carboxylate + NADH + 2 H(+). It participates in alcohol metabolism; ethanol degradation; acetate from ethanol: step 2/2. Its function is as follows. Required for clearance of cellular formaldehyde, a cytotoxic and carcinogenic metabolite that induces DNA damage. The chain is Aldehyde dehydrogenase, mitochondrial (ALDH2) from Equus caballus (Horse).